The sequence spans 318 residues: NADH-ubiquinone oxidoreductase chain 1 (318 aa).

Helical transmembrane passes span 2-22, 70-90, 100-120, 140-160, 172-192, 217-237, 253-273, and 294-314; these read FLVNLLLMIIPILLAVAFLTL, MFIMAPILALSLALTMWTPLP, LGVLFILAMSSLAVYSILWSG, ISYEVTLAIILLSVLLMSGSF, LWLIIPAWPLAMMWFISTLAE, GGSFALFFLAEYANIIMMNAI, EFYTTSFMIKTLLMTITFLWI, and LPLTLALCMWHVSIPILTASI.

Belongs to the complex I subunit 1 family. As to quaternary structure, core subunit of respiratory chain NADH dehydrogenase (Complex I) which is composed of 45 different subunits.

The protein localises to the mitochondrion inner membrane. The catalysed reaction is a ubiquinone + NADH + 5 H(+)(in) = a ubiquinol + NAD(+) + 4 H(+)(out). In terms of biological role, core subunit of the mitochondrial membrane respiratory chain NADH dehydrogenase (Complex I) which catalyzes electron transfer from NADH through the respiratory chain, using ubiquinone as an electron acceptor. Essential for the catalytic activity and assembly of complex I. This is NADH-ubiquinone oxidoreductase chain 1 (MT-ND1) from Emballonura alecto (Philippine sheath-tailed bat).